Here is a 102-residue protein sequence, read N- to C-terminus: DNA/RNA-binding protein Alba 2 (102 aa).

Residues Arg10, Arg13, Arg40, Arg42, Asn43, Arg46, and Arg86 each coordinate DNA.

This sequence belongs to the histone-like Alba family. In terms of assembly, forms homodimers and homotetramers; oligomerization is enhanced and stabilized by DNA. Interacts with Alba 1.

It localises to the cytoplasm. The protein resides in the chromosome. Binds double-stranded DNA tightly but without sequence specificity. Involved in DNA compaction. In Aeropyrum pernix (strain ATCC 700893 / DSM 11879 / JCM 9820 / NBRC 100138 / K1), this protein is DNA/RNA-binding protein Alba 2.